A 304-amino-acid polypeptide reads, in one-letter code: Non-specific ribonucleoside hydrolase RihC (304 aa).

Residue His-233 is part of the active site.

The protein belongs to the IUNH family. RihC subfamily.

In terms of biological role, hydrolyzes both purine and pyrimidine ribonucleosides with a broad-substrate specificity. The chain is Non-specific ribonucleoside hydrolase RihC from Escherichia coli (strain 55989 / EAEC).